The primary structure comprises 208 residues: Thiamine-phosphate synthase (208 aa).

4-amino-2-methyl-5-(diphosphooxymethyl)pyrimidine is bound by residues 36–40 and D68; that span reads QLRMK. The Mg(2+) site is built by D69 and D88. T107 contributes to the 4-amino-2-methyl-5-(diphosphooxymethyl)pyrimidine binding site. 133-135 contributes to the 2-[(2R,5Z)-2-carboxy-4-methylthiazol-5(2H)-ylidene]ethyl phosphate binding site; that stretch reads TTT. K136 serves as a coordination point for 4-amino-2-methyl-5-(diphosphooxymethyl)pyrimidine. G169 provides a ligand contact to 2-[(2R,5Z)-2-carboxy-4-methylthiazol-5(2H)-ylidene]ethyl phosphate.

The protein belongs to the thiamine-phosphate synthase family. Mg(2+) is required as a cofactor.

The enzyme catalyses 2-[(2R,5Z)-2-carboxy-4-methylthiazol-5(2H)-ylidene]ethyl phosphate + 4-amino-2-methyl-5-(diphosphooxymethyl)pyrimidine + 2 H(+) = thiamine phosphate + CO2 + diphosphate. The catalysed reaction is 2-(2-carboxy-4-methylthiazol-5-yl)ethyl phosphate + 4-amino-2-methyl-5-(diphosphooxymethyl)pyrimidine + 2 H(+) = thiamine phosphate + CO2 + diphosphate. It catalyses the reaction 4-methyl-5-(2-phosphooxyethyl)-thiazole + 4-amino-2-methyl-5-(diphosphooxymethyl)pyrimidine + H(+) = thiamine phosphate + diphosphate. It participates in cofactor biosynthesis; thiamine diphosphate biosynthesis; thiamine phosphate from 4-amino-2-methyl-5-diphosphomethylpyrimidine and 4-methyl-5-(2-phosphoethyl)-thiazole: step 1/1. Functionally, condenses 4-methyl-5-(beta-hydroxyethyl)thiazole monophosphate (THZ-P) and 2-methyl-4-amino-5-hydroxymethyl pyrimidine pyrophosphate (HMP-PP) to form thiamine monophosphate (TMP). This is Thiamine-phosphate synthase from Phocaeicola vulgatus (strain ATCC 8482 / DSM 1447 / JCM 5826 / CCUG 4940 / NBRC 14291 / NCTC 11154) (Bacteroides vulgatus).